The chain runs to 81 residues: Omega-conotoxin-like 3 (81 aa).

An N-terminal signal peptide occupies residues 1–22; the sequence is MKLTCMMIVAVLFLTASIFITA. Residues 23-51 constitute a propeptide that is removed on maturation; sequence DNSRNGIENLPRMRRHEMKKPKASKLNKR. 3 cysteine pairs are disulfide-bonded: Cys53-Cys71, Cys60-Cys75, and Cys70-Cys79.

This sequence belongs to the conotoxin O1 superfamily. Expressed by the venom duct.

Its subcellular location is the secreted. Its function is as follows. Omega-conotoxins act at presynaptic membranes, they bind and block voltage-gated calcium channels (Cav). The chain is Omega-conotoxin-like 3 from Conus imperialis (Imperial cone).